A 277-amino-acid polypeptide reads, in one-letter code: 4-hydroxy-3-methylbut-2-enyl diphosphate reductase (277 aa).

Position 12 (Cys-12) interacts with [4Fe-4S] cluster. Positions 36 and 70 each coordinate (2E)-4-hydroxy-3-methylbut-2-enyl diphosphate. Dimethylallyl diphosphate-binding residues include His-36 and His-70. Isopentenyl diphosphate is bound by residues His-36 and His-70. Residue Cys-92 participates in [4Fe-4S] cluster binding. His-120 provides a ligand contact to (2E)-4-hydroxy-3-methylbut-2-enyl diphosphate. His-120 lines the dimethylallyl diphosphate pocket. Residue His-120 participates in isopentenyl diphosphate binding. The Proton donor role is filled by Glu-122. Thr-158 contributes to the (2E)-4-hydroxy-3-methylbut-2-enyl diphosphate binding site. A [4Fe-4S] cluster-binding site is contributed by Cys-186. Residues Ser-214, Asn-216, and Ser-258 each coordinate (2E)-4-hydroxy-3-methylbut-2-enyl diphosphate. Positions 214, 216, and 258 each coordinate dimethylallyl diphosphate. The isopentenyl diphosphate site is built by Ser-214, Asn-216, and Ser-258.

Belongs to the IspH family. The cofactor is [4Fe-4S] cluster.

It carries out the reaction isopentenyl diphosphate + 2 oxidized [2Fe-2S]-[ferredoxin] + H2O = (2E)-4-hydroxy-3-methylbut-2-enyl diphosphate + 2 reduced [2Fe-2S]-[ferredoxin] + 2 H(+). It catalyses the reaction dimethylallyl diphosphate + 2 oxidized [2Fe-2S]-[ferredoxin] + H2O = (2E)-4-hydroxy-3-methylbut-2-enyl diphosphate + 2 reduced [2Fe-2S]-[ferredoxin] + 2 H(+). The protein operates within isoprenoid biosynthesis; dimethylallyl diphosphate biosynthesis; dimethylallyl diphosphate from (2E)-4-hydroxy-3-methylbutenyl diphosphate: step 1/1. It participates in isoprenoid biosynthesis; isopentenyl diphosphate biosynthesis via DXP pathway; isopentenyl diphosphate from 1-deoxy-D-xylulose 5-phosphate: step 6/6. Catalyzes the conversion of 1-hydroxy-2-methyl-2-(E)-butenyl 4-diphosphate (HMBPP) into a mixture of isopentenyl diphosphate (IPP) and dimethylallyl diphosphate (DMAPP). Acts in the terminal step of the DOXP/MEP pathway for isoprenoid precursor biosynthesis. The chain is 4-hydroxy-3-methylbut-2-enyl diphosphate reductase from Campylobacter jejuni subsp. jejuni serotype O:6 (strain 81116 / NCTC 11828).